Consider the following 393-residue polypeptide: MSHYGGNPRGNSSHQFGRKDFQQSDSKHIPKITGQPLPNEVQIPFDNMIYETRNPPKFEKQAKFISEYCINYDRKLQLGRMRAKKFHDKLPPNNLSLDLGKGFETFDPKEGDEKIIMLLEWINQMAPEGGRLKKVIHEADVVCWRGLITKICSTIYNKEEGWRIDAIKRKGVIFLCEEKTEQAKNRDLNQTDLDKRMSYWGHKFEQYVTLDDDAEQPDTSSPVTTKEEYAVVFRNDLQTDQRLNPEKRSIGIFYSGEVDCLDRHGNMLELKTQKGELGHGFYKYSKSFKWWLQSSLVNVDHIIVGLRTQEGHVKSLTSLRTREIPQRASWNFRAGFEFLSTIFTYILNCLEKDGDACVIEYRSEMGIHKGIQMRRVPVDEFDFVPNEFLEKFC.

The tract at residues 1-37 (MSHYGGNPRGNSSHQFGRKDFQQSDSKHIPKITGQPL) is disordered. The span at 17-28 (GRKDFQQSDSKH) shows a compositional bias: basic and acidic residues. Substrate-binding positions include R74, E113, and 144–146 (WRG). Positions 205, 257, 259, 269, and 270 each coordinate Mg(2+). E257 serves as a coordination point for substrate. Positions 271 and 293 each coordinate substrate.

It belongs to the DXO/Dom3Z family. The cofactor is Mg(2+).

The enzyme catalyses a 5'-end NAD(+)-phospho-ribonucleoside in mRNA + H2O = a 5'-end phospho-ribonucleoside in mRNA + NAD(+) + H(+). It catalyses the reaction a 5'-end (N(7)-methyl 5'-triphosphoguanosine)-ribonucleoside-ribonucleotide in mRNA + H2O = a (N(7)-methyl 5'-triphosphoguanosine)-nucleoside + a 5'-end phospho-ribonucleoside in mRNA + H(+). The catalysed reaction is a 5'-end triphospho-ribonucleoside in mRNA + H2O = a 5'-end phospho-ribonucleoside in mRNA + diphosphate + H(+). Decapping enzyme for NAD-capped RNAs: specifically hydrolyzes the nicotinamide adenine dinucleotide (NAD) cap from a subset of RNAs by removing the entire NAD moiety from the 5'-end of an NAD-capped RNA. The NAD-cap is present at the 5'-end of some RNAs and snoRNAs. In contrast to the canonical 5'-end N7 methylguanosine (m7G) cap, the NAD cap promotes mRNA decay. Also acts as a non-canonical decapping enzyme that removes the entire cap structure of m7G capped or incompletely capped RNAs and mediates their subsequent degradation. Specifically degrades pre-mRNAs with a defective 5'-end m7G cap and is part of a pre-mRNA capping quality control. Also possesses RNA 5'-pyrophosphohydrolase activity by hydrolyzing the 5'-end triphosphate to release pyrophosphates. The protein is Decapping nuclease dom-3 of Caenorhabditis elegans.